A 328-amino-acid polypeptide reads, in one-letter code: RNA-binding motif protein, X-linked 2 (328 aa).

Lys8 is covalently cross-linked (Glycyl lysine isopeptide (Lys-Gly) (interchain with G-Cter in SUMO2)). The RRM domain occupies 36–114 (AWIFLGGLPY…RTIRVDHVAN (79 aa)). The segment at 118–328 (PQESEDVDDV…SFHASDRRHY (211 aa)) is disordered. Thr140 is subject to Phosphothreonine. Phosphoserine is present on Ser149. Over residues 157–172 (TKKPKKDKKEKKKKKE) the composition is skewed to basic residues. Basic and acidic residues-rich tracts occupy residues 192-219 (TVKE…ECRE), 236-247 (GRAEEPEWEAKK), and 255-273 (KPSS…DRGR). Residue Lys246 forms a Glycyl lysine isopeptide (Lys-Gly) (interchain with G-Cter in SUMO2) linkage. Residue Ser274 is modified to Phosphoserine. Residues 291-314 (HRSRSRSRSRSPDRSHRHKKHRYS) are compositionally biased toward basic residues. Over residues 315 to 328 (HERESFHASDRRHY) the composition is skewed to basic and acidic residues.

Belongs to the IST3 family. As to quaternary structure, part of the activated spliceosome B/catalytic step 1 spliceosome, one of the forms of the spliceosome which has a well-formed active site but still cannot catalyze the branching reaction and is composed of at least 52 proteins, the U2, U5 and U6 snRNAs and the pre-mRNA. Component of the minor spliceosome, which splices U12-type introns.

Its subcellular location is the nucleus. In terms of biological role, involved in pre-mRNA splicing as component of the activated spliceosome. As a component of the minor spliceosome, involved in the splicing of U12-type introns in pre-mRNAs. The protein is RNA-binding motif protein, X-linked 2 (Rbmx2) of Rattus norvegicus (Rat).